We begin with the raw amino-acid sequence, 201 residues long: Auxin-binding protein 1 (201 aa).

The first 38 residues, 1-38 (MAPDLSELAAAAAARGAYLAGVGVAVLLAASFLPVAES), serve as a signal peptide directing secretion. Cysteine 40 and cysteine 193 are oxidised to a cystine. Positions 95, 97, and 101 each coordinate Zn(2+). Residue asparagine 133 is glycosylated (N-linked (GlcNAc...) asparagine). Histidine 144 contributes to the Zn(2+) binding site. Residues 198–201 (KDEL) carry the Prevents secretion from ER motif.

Homodimer. Post-translationally, glycosylated. Expressed in roots, coleoptiles, leaves, stems, tassels and ears.

The protein localises to the endoplasmic reticulum lumen. Its function is as follows. Receptor for the plant hormone auxin. This is Auxin-binding protein 1 from Zea mays (Maize).